The chain runs to 285 residues: Small ribosomal subunit biogenesis GTPase RsgA (285 aa).

The CP-type G domain maps to 61–215 (KNQLIRPKVA…IIDSPGFSSF (155 aa)). Residues 110–113 (TKID) and 159–167 (GQTGVGKTS) each bind GTP. Residues Cys239, Cys244, His246, and Cys254 each coordinate Zn(2+).

It belongs to the TRAFAC class YlqF/YawG GTPase family. RsgA subfamily. In terms of assembly, monomer. Associates with 30S ribosomal subunit, binds 16S rRNA. Zn(2+) serves as cofactor.

The protein resides in the cytoplasm. One of several proteins that assist in the late maturation steps of the functional core of the 30S ribosomal subunit. Helps release RbfA from mature subunits. May play a role in the assembly of ribosomal proteins into the subunit. Circularly permuted GTPase that catalyzes slow GTP hydrolysis, GTPase activity is stimulated by the 30S ribosomal subunit. This is Small ribosomal subunit biogenesis GTPase RsgA from Mesomycoplasma hyopneumoniae (strain 7448) (Mycoplasma hyopneumoniae).